The primary structure comprises 111 residues: Transcription and mRNA export factor SUS1 (111 aa).

This sequence belongs to the ENY2 family. As to quaternary structure, component of the nuclear pore complex (NPC)-associated TREX-2 complex (transcription and export complex 2), composed of at least SUS1, SAC3, THP1, SEM1, and CDC31. TREX-2 contains 2 SUS1 chains. The TREX-2 complex interacts with the nucleoporin NUP1. Component of the 1.8 MDa SAGA transcription coactivator-HAT complex. SAGA is built of 5 distinct domains with specialized functions. Within the SAGA complex, SUS1, SGF11, SGF73 and UBP8 form an additional subcomplex of SAGA called the DUB module (deubiquitination module). Interacts directly with THP1, SAC3, SGF11, and with the RNA polymerase II.

Its subcellular location is the nucleus. It localises to the nucleoplasm. The protein localises to the cytoplasm. The protein resides in the P-body. Functionally, involved in mRNA export coupled transcription activation by association with both the TREX-2 and the SAGA complexes. At the promoters, SAGA is required for recruitment of the basal transcription machinery. It influences RNA polymerase II transcriptional activity through different activities such as TBP interaction and promoter selectivity, interaction with transcription activators, and chromatin modification through histone acetylation and deubiquitination. Within the SAGA complex, participates in a subcomplex required for deubiquitination of H2B and for the maintenance of steady-state H3 methylation levels. The TREX-2 complex functions in docking export-competent ribonucleoprotein particles (mRNPs) to the nuclear entrance of the nuclear pore complex (nuclear basket). TREX-2 participates in mRNA export and accurate chromatin positioning in the nucleus by tethering genes to the nuclear periphery. May also be involved in cytoplasmic mRNA decay by interaction with components of P-bodies. The protein is Transcription and mRNA export factor SUS1 of Lodderomyces elongisporus (strain ATCC 11503 / CBS 2605 / JCM 1781 / NBRC 1676 / NRRL YB-4239) (Yeast).